Reading from the N-terminus, the 421-residue chain is 26S proteasome non-ATPase regulatory subunit 11A (421 aa).

The PCI domain maps to 227–391 (AYSYFYEAFE…GVLIVFDEPP (165 aa)).

It belongs to the proteasome subunit S9 family. As to quaternary structure, component of the lid subcomplex of the 19S proteasome regulatory particle complex (also named PA700 complex). The 26S proteasome consists of a 20S proteasome core and two 19S regulatory subunits.

The protein resides in the nucleus. The protein localises to the cytoplasm. It localises to the cytosol. In terms of biological role, component of the lid subcomplex of the 26S proteasome, a multiprotein complex involved in the ATP-dependent degradation of ubiquitinated proteins. In the complex, psmd11a is required for proteasome assembly. The chain is 26S proteasome non-ATPase regulatory subunit 11A (psmd11a) from Danio rerio (Zebrafish).